A 273-amino-acid chain; its full sequence is Epithelial sodium channel subunit beta (273 aa).

The Extracellular segment spans residues 1–245 (NCYIFNWGQE…RSISESPTTN (245 aa)). 5 disulfide bridges follow: Cys92-Cys179, Cys117-Cys175, Cys121-Cys171, Cys130-Cys157, and Cys132-Cys146. A helical membrane pass occupies residues 246–273 (VVWLLSNLGGQFGFWMGGSVLCIIEFGE).

Belongs to the amiloride-sensitive sodium channel (TC 1.A.6) family. SCNN1B subfamily. Component of the heterotrimeric epithelial sodium channel (ENaC) composed of an alpha/SCNN1A, a beta/SCNN1B and a gamma/SCNN1G subunit.

It localises to the apical cell membrane. The protein localises to the cytoplasmic vesicle membrane. The enzyme catalyses Na(+)(in) = Na(+)(out). Originally identified and characterized by its inhibition by the diuretic drug amiloride. Its function is as follows. This is one of the three pore-forming subunits of the heterotrimeric epithelial sodium channel (ENaC), a critical regulator of sodium balance and fluid homeostasis. ENaC operates in epithelial tissues, where it mediates the electrodiffusion of sodium ions from extracellular fluid through the apical membrane of cells, with water following osmotically. It plays a key role in maintaining sodium homeostasis through electrogenic sodium reabsorption in the kidneys. Additionally, ENaC is essential for airway surface liquid homeostasis, which is crucial for proper mucus clearance. The sequence is that of Epithelial sodium channel subunit beta from Aquarana catesbeiana (American bullfrog).